The sequence spans 108 residues: Replication restart protein PriB (108 aa).

In terms of domain architecture, SSB spans Ile-8 to Asp-108.

It belongs to the PriB family. As to quaternary structure, homodimer. Interacts with PriA and DnaT. Component of the replication restart primosome. Primosome assembly occurs via a 'hand-off' mechanism. PriA binds to replication forks, subsequently PriB then DnaT bind; DnaT then displaces ssDNA to generate the helicase loading substrate.

Functionally, involved in the restart of stalled replication forks, which reloads the replicative helicase on sites other than the origin of replication; the PriA-PriB pathway is the major replication restart pathway. During primosome assembly it facilitates complex formation between PriA and DnaT on DNA; stabilizes PriA on DNA. Stimulates the DNA unwinding activity of PriA helicase. This is Replication restart protein PriB from Haemophilus influenzae (strain ATCC 51907 / DSM 11121 / KW20 / Rd).